The sequence spans 152 residues: CASP-like protein 5B3 (152 aa).

Residues 1 to 21 lie on the Cytoplasmic side of the membrane; sequence MIDIPGTPGTLTGLVLRISQC. Helical transmembrane passes span 22–42 and 43–63; these read VFAAGSISYMVTSGGFFSFTA and FCYLIAAMGLQVIWSFGLAIL. The Extracellular portion of the chain corresponds to 64 to 77; it reads DTFALVRKKTLLSP. The helical transmembrane segment at 78–98 threads the bilayer; that stretch reads VLVSLFVVGDWVTSTLSLAGA. The Cytoplasmic segment spans residues 99 to 127; the sequence is SSSAGITVLYFGDLGSCSFEAECWKYQLS. A helical membrane pass occupies residues 128–148; that stretch reads VALAFLCWITIAVSSLTTLWL. The Extracellular segment spans residues 149–152; the sequence is LASA.

It belongs to the Casparian strip membrane proteins (CASP) family. In terms of assembly, homodimer and heterodimers. As to expression, expressed in the stele of the root and in leaves.

The protein localises to the cell membrane. The sequence is that of CASP-like protein 5B3 from Arabidopsis thaliana (Mouse-ear cress).